Consider the following 237-residue polypeptide: uncharacterized protein (237 aa).

Positions 3–116 (RILLVEDDER…VVMAKIKSVL (114 aa)) constitute a Response regulatory domain. Asp52 bears the 4-aspartylphosphate mark. A DNA-binding region (ompR/PhoB-type) is located at residues 131–229 (SRIVELGGLT…IRGQGYQFQV (99 aa)).

In terms of processing, phosphorylated by YvcQ.

The protein localises to the cytoplasm. Functionally, member of the two-component regulatory system YvcQ/YvcP. This is an uncharacterized protein from Bacillus subtilis (strain 168).